Reading from the N-terminus, the 490-residue chain is Polyamine oxidase 2 (490 aa).

FAD-binding residues include Glu-57, Arg-65, Val-246, and Glu-433. Positions 488 to 490 match the Microbody targeting signal motif; it reads SRL.

This sequence belongs to the flavin monoamine oxidase family. FAD is required as a cofactor. In terms of tissue distribution, highly expressed in flowers and siliques. Also found in leaf and stem and in low levels in cotyledons, roots and in seedlings.

Its subcellular location is the peroxisome. It carries out the reaction spermine + O2 + H2O = 3-aminopropanal + spermidine + H2O2. The enzyme catalyses N(1)-acetylspermine + O2 + H2O = 3-acetamidopropanal + spermidine + H2O2. It catalyses the reaction spermidine + O2 + H2O = 3-aminopropanal + putrescine + H2O2. It functions in the pathway amine and polyamine degradation; spermine degradation. Its pathway is amine and polyamine degradation; spermidine degradation. Functionally, flavoenzyme involved in polyamine back-conversion. Catalyzes the oxidation of the secondary amino group of polyamines, such as spermine, spermidine and their acetyl derivatives. Substrate preference is N(1)-acetylspermine &gt; spermine &gt; spermidine. Plays an important role in the regulation of polyamine intracellular concentration. Involved in abscisic acid-mediated developmental processes. May contribute to nitric oxide-mediated effects on root growth. This Arabidopsis thaliana (Mouse-ear cress) protein is Polyamine oxidase 2.